Consider the following 499-residue polypeptide: Beta-amylase (499 aa).

Positions 55, 95, and 103 each coordinate substrate. Glu188 acts as the Proton donor in catalysis. The substrate site is built by Lys298, His303, and Thr345. The active-site Proton acceptor is the Glu383. Substrate-binding positions include 384-385 and Arg423; that span reads NA.

The protein belongs to the glycosyl hydrolase 14 family. As to quaternary structure, homotetramer.

The catalysed reaction is Hydrolysis of (1-&gt;4)-alpha-D-glucosidic linkages in polysaccharides so as to remove successive maltose units from the non-reducing ends of the chains.. This Ipomoea batatas (Sweet potato) protein is Beta-amylase (BMY1).